The primary structure comprises 150 residues: D-aminoacyl-tRNA deacylase (150 aa).

The short motif at 138 to 139 (GP) is the Gly-cisPro motif, important for rejection of L-amino acids element.

This sequence belongs to the DTD family. As to quaternary structure, homodimer.

The protein resides in the cytoplasm. The enzyme catalyses glycyl-tRNA(Ala) + H2O = tRNA(Ala) + glycine + H(+). The catalysed reaction is a D-aminoacyl-tRNA + H2O = a tRNA + a D-alpha-amino acid + H(+). Functionally, an aminoacyl-tRNA editing enzyme that deacylates mischarged D-aminoacyl-tRNAs. Also deacylates mischarged glycyl-tRNA(Ala), protecting cells against glycine mischarging by AlaRS. Acts via tRNA-based rather than protein-based catalysis; rejects L-amino acids rather than detecting D-amino acids in the active site. By recycling D-aminoacyl-tRNA to D-amino acids and free tRNA molecules, this enzyme counteracts the toxicity associated with the formation of D-aminoacyl-tRNA entities in vivo and helps enforce protein L-homochirality. The chain is D-aminoacyl-tRNA deacylase from Chlorobaculum tepidum (strain ATCC 49652 / DSM 12025 / NBRC 103806 / TLS) (Chlorobium tepidum).